The primary structure comprises 426 residues: 3-phosphoshikimate 1-carboxyvinyltransferase (426 aa).

Residues Lys-21, Ser-22, and Arg-26 each coordinate 3-phosphoshikimate. Lys-21 provides a ligand contact to phosphoenolpyruvate. 2 residues coordinate phosphoenolpyruvate: Gly-91 and Arg-119. 3-phosphoshikimate is bound by residues Ser-162, Ser-163, Gln-164, Ser-190, Asp-304, and Lys-331. Gln-164 is a binding site for phosphoenolpyruvate. Asp-304 (proton acceptor) is an active-site residue. 3 residues coordinate phosphoenolpyruvate: Arg-335, Arg-377, and Lys-403.

It belongs to the EPSP synthase family. Monomer.

Its subcellular location is the cytoplasm. The catalysed reaction is 3-phosphoshikimate + phosphoenolpyruvate = 5-O-(1-carboxyvinyl)-3-phosphoshikimate + phosphate. Its pathway is metabolic intermediate biosynthesis; chorismate biosynthesis; chorismate from D-erythrose 4-phosphate and phosphoenolpyruvate: step 6/7. In terms of biological role, catalyzes the transfer of the enolpyruvyl moiety of phosphoenolpyruvate (PEP) to the 5-hydroxyl of shikimate-3-phosphate (S3P) to produce enolpyruvyl shikimate-3-phosphate and inorganic phosphate. The chain is 3-phosphoshikimate 1-carboxyvinyltransferase from Clostridium kluyveri (strain ATCC 8527 / DSM 555 / NBRC 12016 / NCIMB 10680 / K1).